The following is a 539-amino-acid chain: Phosphatidylinositol 4-phosphate 5-kinase type-1 beta (539 aa).

Positions Met-1 to Tyr-21 are disordered. The region spanning Ala-25–Val-395 is the PIPK domain. Phosphoserine is present on residues Ser-445, Ser-447, and Ser-448.

Interacts with RAC1, AJUBA, PLD1, PLD2 and ARF1. Highly expressed in brain and testis. Barely detectable in liver and skeletal muscle.

It is found in the cytoplasm. Its subcellular location is the cytosol. It localises to the cell membrane. The protein localises to the endomembrane system. It carries out the reaction a 1,2-diacyl-sn-glycero-3-phospho-(1D-myo-inositol 4-phosphate) + ATP = a 1,2-diacyl-sn-glycero-3-phospho-(1D-myo-inositol-4,5-bisphosphate) + ADP + H(+). The catalysed reaction is 1-octadecanoyl-2-(5Z,8Z,11Z,14Z)-eicosatetraenoyl-sn-glycero-3-phospho-1D-myo-inositol 4-phosphate + ATP = 1-octadecanoyl-2-(5Z,8Z,11Z,14Z)-eicosatetraenoyl-sn-glycero-3-phospho-1D-myo-inositol 4,5-bisphosphate + ADP + H(+). It catalyses the reaction 1-octadecanoyl-2-(9Z)-octadecenoyl-sn-glycero-3-phospho-1D-myo-inositol 4-phosphate + ATP = 1-octadecanoyl-2-(9Z)-octadecenoyl-sn-glycero-3-phospho-1D-myo-inositol 4,5-bisphosphate + ADP + H(+). The enzyme catalyses 1-octadecanoyl-2-(9Z)-octadecenoyl-sn-glycero-3-phospho-1D-myo-inositol + ATP = 1-octadecanoyl-2-(9Z)-octadecenoyl-sn-glycero-3-phospho-1D-myo-inositol 5-phosphate + ADP + H(+). It carries out the reaction 1-octadecanoyl-2-(9Z,12Z)-octadecadienoyl-sn-glycero-3-phospho-1D-myo-inositol + ATP = 1-octadecanoyl-2-(9Z,12Z)-octadecadienoyl-sn-glycero-3-phospho-1D-myo-inositol 5-phosphate + ADP + H(+). The catalysed reaction is 1-octadecanoyl-2-(5Z,8Z,11Z,14Z-eicosatetraenoyl)-sn-glycero-3-phospho-(1D-myo-inositol) + ATP = 1-octadecanoyl-2-(5Z,8Z,11Z,14Z)-eicosatetraenoyl-sn-glycero-3-phospho-1D-myo-inositol 5-phosphate + ADP + H(+). It catalyses the reaction 1,2-di-(9Z,12Z)-octadecadienoyl-sn-glycero-3-phospho-1D-myo-inositol + ATP = 1,2-di(9Z,12Z)-octadecadienoyl-sn-glycero-3-phospho-1D-myo-inositol 5-phosphate + ADP + H(+). Activated by phosphatidic acid. In terms of biological role, catalyzes the phosphorylation of phosphatidylinositol 4-phosphate (PtdIns(4)P/PI4P) to form phosphatidylinositol 4,5-bisphosphate (PtdIns(4,5)P2/PIP2), a lipid second messenger that regulates several cellular processes such as signal transduction, vesicle trafficking, actin cytoskeleton dynamics, cell adhesion, and cell motility. PtdIns(4,5)P2 can directly act as a second messenger or can be utilized as a precursor to generate other second messengers: inositol 1,4,5-trisphosphate (IP3), diacylglycerol (DAG) or phosphatidylinositol-3,4,5-trisphosphate (PtdIns(3,4,5)P3/PIP3). Mediates RAC1-dependent reorganization of actin filaments. Contributes to the activation of phospholipase PLD2. Together with PIP5K1A, is required, after stimulation by G-protein coupled receptors, for the synthesis of IP3 that will induce stable platelet adhesion. The protein is Phosphatidylinositol 4-phosphate 5-kinase type-1 beta of Mus musculus (Mouse).